Consider the following 465-residue polypeptide: Antithrombin-III (465 aa).

Positions Met1–Cys32 are cleaved as a signal peptide. 2 disulfide bridges follow: Cys41–Cys161 and Cys54–Cys128. Thr64 is subject to Phosphothreonine. The residue at position 69 (Ser69) is a Phosphoserine. Trp82 is a heparin binding site. Asn129 carries an N-linked (GlcNAc...) asparagine glycan. Arg162 is a binding site for heparin. An N-linked (GlcNAc...) asparagine glycan is attached at Asn168. Arg178 is a heparin binding site. Residues Asn188 and Asn225 are each glycosylated (N-linked (GlcNAc...) asparagine). Cys280 and Cys463 are disulfide-bonded.

It belongs to the serpin family. As to quaternary structure, forms protease inhibiting heterodimer with TMPRSS7. In terms of processing, phosphorylated by FAM20C in the extracellular medium. Plasma.

Its subcellular location is the secreted. The protein localises to the extracellular space. Its function is as follows. Most important serine protease inhibitor in plasma that regulates the blood coagulation cascade. AT-III inhibits thrombin, matriptase-3/TMPRSS7, as well as factors IXa, Xa and XIa. Its inhibitory activity is greatly enhanced in the presence of heparin. The polypeptide is Antithrombin-III (Serpinc1) (Mus musculus (Mouse)).